A 105-amino-acid polypeptide reads, in one-letter code: Integration host factor (105 aa).

The H2TH motif, binds DNA motif lies at 64–71; the sequence is LPKVGKVK. The lid, binds DNA stretch occupies residues 82-94; that stretch reads APTRRLRGLGDRQ.

This sequence belongs to the actinobacterial IHF (aIHF) family. In terms of assembly, homodimer in solution. Binds DNA as a monomer.

The protein localises to the cytoplasm. Functionally, a nucleoid-associated protein (NAP) required for septum formation and normal cell division as well as for DNA segregation. Binds about 135 sites across the chromosome, most of which are genes involved in virulence; most DNA-binding sites are immediately upstream of transcription start sites. When mIHF is depleted most of the genes are down-regulated. Binds supercoiled and linear dsDNA in a concentration-dependent manner, probably non-sequence specifically. Binding compacts DNA, protecting it from degradation. Initial binding to supercoiled DNA opens it fully, followed by bending and compaction. Bends and thus compacts linear DNA. Binds DNA via 2 sites, forms left-handed loops on linear DNA; at low concentrations unwinds larger cosmids (42.6 kb) then collapses and condenses DNA as protein levels rise. Forms mostly left-handed loops on condensing cosmid DNA. The polypeptide is Integration host factor (Mycobacterium tuberculosis (strain ATCC 25618 / H37Rv)).